Consider the following 92-residue polypeptide: Ferredoxin-like protein in nif region (92 aa).

4Fe-4S ferredoxin-type domains are found at residues 2–28 (ALKI…SLAG) and 29–65 (PHFE…LADG). C9, C12, C15, C19, C38, C41, C50, and C54 together coordinate [4Fe-4S] cluster.

[4Fe-4S] cluster serves as cofactor.

Functionally, ferredoxins are iron-sulfur proteins that transfer electrons in a wide variety of metabolic reactions. This is Ferredoxin-like protein in nif region from Azotobacter vinelandii.